A 272-amino-acid chain; its full sequence is METYAVFGNPIAHSKSPFIHQQFAQQLNIEHPYGRVLAPINDFINTLNAFFSAGGKGANVTVPFKEEAFARADELTERAALAGAVNTLKRLEDGRLLGDNTDGVGLLSDLERLSFIRPGLRILLIGAGGASRGVLLPLLSLDCAVTITNRTVFRAEELAKLFAHTGSIQALGMDKLEGHEFDLIINATSSGISGDIPAIPSSLIHPGIYCYDMFYQKGKTPFLAWCEQRGSKRNADGLGMLVAQAAHAFLLWHGVLPDVEPVIKLLQQELSA.

Shikimate is bound by residues 14-16 (SKS) and Thr61. Lys65 serves as the catalytic Proton acceptor. Glu77 provides a ligand contact to NADP(+). The shikimate site is built by Asn86 and Asp102. Residues 126–130 (GAGGA), 149–154 (NRTVFR), and Met213 each bind NADP(+). Tyr215 is a binding site for shikimate. Residue Gly237 coordinates NADP(+).

Belongs to the shikimate dehydrogenase family. In terms of assembly, homodimer.

The catalysed reaction is shikimate + NADP(+) = 3-dehydroshikimate + NADPH + H(+). Its pathway is metabolic intermediate biosynthesis; chorismate biosynthesis; chorismate from D-erythrose 4-phosphate and phosphoenolpyruvate: step 4/7. Involved in the biosynthesis of the chorismate, which leads to the biosynthesis of aromatic amino acids. Catalyzes the reversible NADPH linked reduction of 3-dehydroshikimate (DHSA) to yield shikimate (SA). The chain is Shikimate dehydrogenase (NADP(+)) from Escherichia coli O127:H6 (strain E2348/69 / EPEC).